The sequence spans 163 residues: Transcription elongation factor GreB (163 aa).

Positions 54-76 (GKRRMREIDRRIRFLTKRLEAAV) form a coiled coil.

The protein belongs to the GreA/GreB family. GreB subfamily.

Necessary for efficient RNA polymerase transcription elongation past template-encoded arresting sites. The arresting sites in DNA have the property of trapping a certain fraction of elongating RNA polymerases that pass through, resulting in locked ternary complexes. Cleavage of the nascent transcript by cleavage factors such as GreA or GreB allows the resumption of elongation from the new 3'terminus. GreB releases sequences of up to 9 nucleotides in length. The polypeptide is Transcription elongation factor GreB (Neisseria meningitidis serogroup B (strain ATCC BAA-335 / MC58)).